The following is an 832-amino-acid chain: Protein P (832 aa).

Positions 1–177 are terminal protein domain (TP); sequence MPLSYQHFRK…FCGSPYSWEQ (177 aa). A spacer region spans residues 178–335; sequence ELQHGAESFN…HCLSHLVNLL (158 aa). 2 stretches are compositionally biased toward polar residues: residues 205–220 and 251–263; these read SKHQQSRLGLQPQQGQ and SGHNNNSASESAS. The tract at residues 205-263 is disordered; the sequence is SKHQQSRLGLQPQQGQLAKGQRGRSGSVRSRAHSATRRSVGVEPSGSGHNNNSASESAS. The segment at 336 to 679 is polymerase/reverse transcriptase domain (RT); the sequence is EDWGPCTEHG…YATLYPVARQ (344 aa). A Reverse transcriptase domain is found at 346 to 589; the sequence is KHHIRIPRTP…YSLNFMGYVI (244 aa). Asp-418, Asp-540, and Asp-541 together coordinate Mg(2+).

This sequence belongs to the hepadnaviridae P protein family.

The catalysed reaction is DNA(n) + a 2'-deoxyribonucleoside 5'-triphosphate = DNA(n+1) + diphosphate. The enzyme catalyses Endonucleolytic cleavage to 5'-phosphomonoester.. Activated by host HSP70 and HSP40 in vitro to be able to bind the epsilon loop of the pgRNA. Because deletion of the RNase H region renders the protein partly chaperone-independent, the chaperones may be needed indirectly to relieve occlusion of the RNA-binding site by this domain. Inhibited by several reverse-transcriptase inhibitors: Lamivudine, Adefovir and Entecavir. Its function is as follows. Multifunctional enzyme that converts the viral RNA genome into dsDNA in viral cytoplasmic capsids. This enzyme displays a DNA polymerase activity that can copy either DNA or RNA templates, and a ribonuclease H (RNase H) activity that cleaves the RNA strand of RNA-DNA heteroduplexes in a partially processive 3'- to 5'-endonucleasic mode. Neo-synthesized pregenomic RNA (pgRNA) are encapsidated together with the P protein, and reverse-transcribed inside the nucleocapsid. Initiation of reverse-transcription occurs first by binding the epsilon loop on the pgRNA genome, and is initiated by protein priming, thereby the 5'-end of (-)DNA is covalently linked to P protein. Partial (+)DNA is synthesized from the (-)DNA template and generates the relaxed circular DNA (RC-DNA) genome. After budding and infection, the RC-DNA migrates in the nucleus, and is converted into a plasmid-like covalently closed circular DNA (cccDNA). The activity of P protein does not seem to be necessary for cccDNA generation, and is presumably released from (+)DNA by host nuclear DNA repair machinery. This chain is Protein P, found in Gorilla gorilla (western gorilla).